The sequence spans 86 residues: Serine protease inhibitor Kazal-type 2 (86 aa).

Positions 1–16 (MLRLVLLLLVTDFAAS) are cleaved as a signal peptide. A Kazal-like domain is found at 32-86 (QFRTPDCGHFDFPACPRNLNPVCGTDMNTYSNECTLCMKIREDGSHINIIKDEPC). 3 cysteine pairs are disulfide-bonded: C38/C68, C46/C65, and C54/C86.

In terms of tissue distribution, expressed in sperm (at protein level). Expressed in testis but not in ovary, brain, heart, kidney or lung. Within testis, expressed in epididymis and germ cells.

It is found in the secreted. The protein localises to the cytoplasmic vesicle. Its subcellular location is the secretory vesicle. The protein resides in the acrosome. In terms of biological role, as a strong inhibitor of acrosin, it is required for normal spermiogenesis. It probably hinders premature activation of proacrosin and other proteases, thus preventing the cascade of events leading to spermiogenesis defects. May be involved in the regulation of serine protease-dependent germ cell apoptosis. It also inhibits trypsin. The protein is Serine protease inhibitor Kazal-type 2 (Spink2) of Mus musculus (Mouse).